Here is a 195-residue protein sequence, read N- to C-terminus: Glycerol-3-phosphate acyltransferase (195 aa).

A run of 5 helical transmembrane segments spans residues 3 to 23 (IHAV…GLIL), 53 to 73 (AVMT…LAKI), 80 to 100 (FAFI…WLLF), 115 to 135 (LIEY…FAIF), and 147 to 167 (IFVA…VFIA).

The protein belongs to the PlsY family. Probably interacts with PlsX.

Its subcellular location is the cell inner membrane. The enzyme catalyses an acyl phosphate + sn-glycerol 3-phosphate = a 1-acyl-sn-glycero-3-phosphate + phosphate. It participates in lipid metabolism; phospholipid metabolism. Catalyzes the transfer of an acyl group from acyl-phosphate (acyl-PO(4)) to glycerol-3-phosphate (G3P) to form lysophosphatidic acid (LPA). This enzyme utilizes acyl-phosphate as fatty acyl donor, but not acyl-CoA or acyl-ACP. The chain is Glycerol-3-phosphate acyltransferase from Ehrlichia chaffeensis (strain ATCC CRL-10679 / Arkansas).